The following is a 356-amino-acid chain: Protein RecA (356 aa).

77–84 (GPESSGKT) is a binding site for ATP.

Belongs to the RecA family.

It localises to the cytoplasm. Can catalyze the hydrolysis of ATP in the presence of single-stranded DNA, the ATP-dependent uptake of single-stranded DNA by duplex DNA, and the ATP-dependent hybridization of homologous single-stranded DNAs. It interacts with LexA causing its activation and leading to its autocatalytic cleavage. The chain is Protein RecA from Caulobacter sp. (strain K31).